We begin with the raw amino-acid sequence, 397 residues long: Elongation factor Tu (397 aa).

Positions 10–207 (KPHVNIGTIG…AVDESIPEPV (198 aa)) constitute a tr-type G domain. The interval 19 to 26 (GHVDHGKT) is G1. Position 19–26 (19–26 (GHVDHGKT)) interacts with GTP. A Mg(2+)-binding site is contributed by T26. The segment at 63–67 (GITIN) is G2. A G3 region spans residues 84 to 87 (DAPG). GTP contacts are provided by residues 84-88 (DAPGH) and 139-142 (NKSD). Residues 139–142 (NKSD) are G4. The G5 stretch occupies residues 177 to 179 (SGL).

This sequence belongs to the TRAFAC class translation factor GTPase superfamily. Classic translation factor GTPase family. EF-Tu/EF-1A subfamily. In terms of assembly, monomer.

It localises to the cytoplasm. It catalyses the reaction GTP + H2O = GDP + phosphate + H(+). GTP hydrolase that promotes the GTP-dependent binding of aminoacyl-tRNA to the A-site of ribosomes during protein biosynthesis. This chain is Elongation factor Tu, found in Clavibacter michiganensis subsp. michiganensis (strain NCPPB 382).